We begin with the raw amino-acid sequence, 629 residues long: Acetylcholinesterase (629 aa).

The first 38 residues, 1-38 (MGQLSILCLFVTVCASVCGYSWPSDETTTKPSQFKDFH), serve as a signal peptide directing secretion. C103 and C130 are oxidised to a cystine. N-linked (GlcNAc...) asparagine glycosylation occurs at N125. Residue S253 is the Acyl-ester intermediate of the active site. Residues C307 and C322 are joined by a disulfide bond. An N-linked (GlcNAc...) asparagine glycan is attached at N308. E382 serves as the catalytic Charge relay system. N-linked (GlcNAc...) asparagine glycosylation is present at N418. A disulfide bridge connects residues C458 and C574. Catalysis depends on H496, which acts as the Charge relay system. N509 is a glycosylation site (N-linked (GlcNAc...) asparagine). S605 carries GPI-anchor amidated serine lipidation. Residues 606-629 (SSNELLPPSTSLVLIWIMTLLNAL) constitute a propeptide, removed in mature form.

It belongs to the type-B carboxylesterase/lipase family. Homodimer; disulfide-linked. In terms of processing, the N-terminus is blocked.

Its subcellular location is the synapse. The protein localises to the cell membrane. The enzyme catalyses acetylcholine + H2O = choline + acetate + H(+). In terms of biological role, rapidly hydrolyzes choline released into the synapse. In Leptinotarsa decemlineata (Colorado potato beetle), this protein is Acetylcholinesterase.